A 100-amino-acid polypeptide reads, in one-letter code: Urease subunit gamma (100 aa).

This sequence belongs to the urease gamma subunit family. In terms of assembly, heterotrimer of UreA (gamma), UreB (beta) and UreC (alpha) subunits. Three heterotrimers associate to form the active enzyme.

Its subcellular location is the cytoplasm. It carries out the reaction urea + 2 H2O + H(+) = hydrogencarbonate + 2 NH4(+). The protein operates within nitrogen metabolism; urea degradation; CO(2) and NH(3) from urea (urease route): step 1/1. The chain is Urease subunit gamma from Ralstonia nicotianae (strain ATCC BAA-1114 / GMI1000) (Ralstonia solanacearum).